The sequence spans 181 residues: ATP-dependent protease subunit ClpQ (181 aa).

Serine 2 is an active-site residue. Positions 165, 168, and 171 each coordinate Na(+).

It belongs to the peptidase T1B family. HslV subfamily. As to quaternary structure, a double ring-shaped homohexamer of ClpQ is capped on each side by a ring-shaped ClpY homohexamer. The assembly of the ClpQ/ClpY complex is dependent on binding of ATP.

It localises to the cytoplasm. Its function is as follows. Protease subunit of a proteasome-like degradation complex. This chain is ATP-dependent protease subunit ClpQ (clpQ), found in Bacillus velezensis (strain DSM 23117 / BGSC 10A6 / LMG 26770 / FZB42) (Bacillus amyloliquefaciens subsp. plantarum).